The following is a 497-amino-acid chain: Vacuolar-processing enzyme beta-isozyme 1 (497 aa).

The first 23 residues, 1–23 (MAARCWVWGFVVALLAVAAAADG), serve as a signal peptide directing secretion. N-linked (GlcNAc...) asparagine glycosylation is present at asparagine 153. Histidine 180 is an active-site residue. Cysteine 222 (nucleophile) is an active-site residue. Cysteine 255 and cysteine 269 are oxidised to a cystine. Asparagine 340 is a glycosylation site (N-linked (GlcNAc...) asparagine). Disulfide bonds link cysteine 432–cysteine 462 and cysteine 444–cysteine 479.

It belongs to the peptidase C13 family. Auto-catalytic activation. As to expression, expressed in developing seeds.

The protein localises to the protein storage vacuole. The catalysed reaction is Hydrolysis of proteins and small molecule substrates at -Asn-|-Xaa- bonds.. In terms of biological role, asparagine-specific endopeptidase that may be involved in processing of proteins targeted to vacuoles. Cysteine protease required for post-translational proteolysis of seed storage proteins in the protein storage vacuole (PSV) of developing seeds, by processing of proglutelin precursor to mature glutelin subunits, thus contributing to the formation of protein crystalline structures in PSV. The protein is Vacuolar-processing enzyme beta-isozyme 1 of Oryza sativa subsp. japonica (Rice).